The following is a 1347-amino-acid chain: MDLLSGTYIFAVLLACVVFHSGAQEKNYTIREEMPENVLIGDLLKDLNLSLIPNKSLTTAMQFKLVYKTGDVPLIRIEEDTGEIFTTGARIDREKLCAGIPRDEHCFYEVEVAILPDEIFRLVKIRFLIEDINDNAPLFPATVINISIPENSAINSKYTLPAAVDPDVGINGVQNYELIKSQNMFGLDVIETPEGDKMPQLIVQKELDREKKDTYVMKVKVEDGGFPQRSSTAILQVSVTDTNDNHPVFKETEIEVSIPENAPVGTSVTQLHATDADIGENAKIHFSFSNLVSNIARRLFHLNATTGLITIKEPLDREETPNHKLLVLASDGGLMPARAMVLVNVTDVNDNVPSIDIRYIVNPVNDTVVLSENIPLNTKIALITVTDKDADHNGRVTCFTDHEIPFRLRPVFSNQFLLETAAYLDYESTKEYAIKLLAADAGKPPLNQSAMLFIKVKDENDNAPVFTQSFVTVSIPENNSPGIQLTKVSATDADSGPNAEINYLLGPDAPPEFSLDRRTGMLTVVKKLDREKEDKYLFTILAKDNGVPPLTSNVTVFVSIIDQNDNSPVFTHNEYNFYVPENLPRHGTVGLITVTDPDYGDNSAVTLSILDENDDFTIDSQTGVIRPNISFDREKQESYTFYVKAEDGGRVSRSSSAKVTINVVDVNDNKPVFIVPPSNYSYELVLPSTNPGTVVFQVIAVDNDTGMNAEVRYSIVGGNTRDLFAIDQETGNITLMEKCDVTDLGLHRVLVKANDLGQPDSLFSVVIVNLFVNESVTNATLINELVRKSIEAPVTPNTEIADVSSPTNDYVKILVAAVAGTITVVVVIFITAVVRCRQAPHLKAAQKNKQNSEWATPNPENRQMIMMKKRKKKKKHSPKNLLLNFVTIEETKADDVDSDGNRVTLDLPIDLEEQTMGKYDWVTTPTTFKPDSPDLARHYKSASPQPAFQIQPETPLNSKHHIIQELPLDNTFVACDSISKCSSSSSDPYSVSDCGYPVTTFEVPVSVHTRPPMKEVVRSCTPMKESTTMEIWIHPQPQRKSEGKVAGKSQRRVTFHLPEGSQESSSDGGLGDHDAGSLTSTSHGLPLGYPQEEYFDRATPSNRTEGDGNSDPESTFIPGLKKAAEITVQPTVEEASDNCTQECLIYGHSDACWMPASLDHSSSLQAQASALCHSPPLSQASTQHHSPPVTQTIALCHSPPVTQTIALCHSPPPIQVSALRHSPPLVQATALHHSPPSAQASALCYSPPLAQAAAISHSSPLPQVIALHRSQAQSSVSLQQGWVQGADGLCSVDQGVQGSATSQFYTMSERLHASDDSIKVIPLTTFTPRQQARPSRGDSPIMEEHPL.

An N-terminal signal peptide occupies residues 1–23; that stretch reads MDLLSGTYIFAVLLACVVFHSGA. Residues 24–812 are Extracellular-facing; sequence QEKNYTIREE…VSSPTNDYVK (789 aa). 7 Cadherin domains span residues 26-139, 140-249, 250-355, 362-466, 467-570, 571-673, and 677-795; these read KNYT…APLF, PATV…HPVF, KETE…VPSI, NPVN…APVF, TQSF…SPVF, THNE…KPVF, and PSNY…APVT. Asparagine 27, asparagine 48, and asparagine 54 each carry an N-linked (GlcNAc...) asparagine glycan. Residue asparagine 344 is glycosylated (N-linked (GlcNAc...) asparagine). Asparagine 553 is a glycosylation site (N-linked (GlcNAc...) asparagine). N-linked (GlcNAc...) asparagine glycosylation occurs at asparagine 773. Residues 813–833 form a helical membrane-spanning segment; sequence ILVAAVAGTITVVVVIFITAV. Topologically, residues 834–1347 are cytoplasmic; sequence VRCRQAPHLK…DSPIMEEHPL (514 aa). Disordered stretches follow at residues 1057–1091, 1097–1116, and 1326–1347; these read LPEG…GYPQ, RATP…ESTF, and FTPR…EHPL.

The protein resides in the cell membrane. Its function is as follows. Potential calcium-dependent cell-adhesion protein. The chain is Protocadherin-11 X-linked (PCDH11X) from Gorilla gorilla gorilla (Western lowland gorilla).